The following is a 508-amino-acid chain: UBX domain-containing protein 4 (508 aa).

The interaction with UBQLN1 stretch occupies residues 1-200 (MLWFQGAIPA…PAEDLNIRVE (200 aa)). The Cytoplasmic segment spans residues 1–413 (MLWFQGAIPA…VHSSSGDIWT (413 aa)). Composition is skewed to polar residues over residues 117–151 (SETSVANGSQSESSVSTPSASFEPNNTCENSQSRN) and 160–187 (TSDTKSDTATGGESAGHATSSQEPSGCS). Positions 117–196 (SETSVANGSQ…SDQRPAEDLN (80 aa)) are disordered. The UBX domain occupies 315–393 (ERSTVARIQF…ELAPSASVVV (79 aa)). The stretch at 414-434 (LLGTVLYPFLAIWRLISNFLF) is an intramembrane region. The Cytoplasmic portion of the chain corresponds to 435–508 (SNPPPTQTSV…TWNGNSTQQM (74 aa)). Residues 440–508 (TQTSVRVTSS…TWNGNSTQQM (69 aa)) are disordered. Over residues 441–458 (QTSVRVTSSEPPNPASSS) the composition is skewed to polar residues. Residues 459-491 (KSEKREPVRKRVLEKRGDDFKKEGKIYRLRTQD) are compositionally biased toward basic and acidic residues. Thr489 carries the post-translational modification Phosphothreonine. Residues 498–508 (NTWNGNSTQQM) show a composition bias toward polar residues.

Directly interacts with VCP. Interacts with UBQLN1. Forms a complex with VCP and UBQLN1.

It is found in the endoplasmic reticulum membrane. The protein localises to the nucleus envelope. Its function is as follows. Involved in endoplasmic reticulum-associated protein degradation (ERAD). Acts as a platform to recruit both UBQLN1 and VCP to the ER during ERAD. This Pongo abelii (Sumatran orangutan) protein is UBX domain-containing protein 4 (UBXN4).